We begin with the raw amino-acid sequence, 31 residues long: Cliotide T17 (31 aa).

A cross-link (cyclopeptide (Gly-Asn)) is located at residues 1-31; that stretch reads GTVPCGESCVFIPCITGIAGCSCKNKVCYLN. 3 cysteine pairs are disulfide-bonded: cysteine 5–cysteine 21, cysteine 9–cysteine 23, and cysteine 14–cysteine 28.

Contains 3 disulfide bonds. In terms of processing, this is a cyclic peptide. Expressed in root nodules but not in seed.

Functionally, probably participates in a plant defense mechanism. The sequence is that of Cliotide T17 from Clitoria ternatea (Butterfly pea).